We begin with the raw amino-acid sequence, 249 residues long: MAARRSQRRRGRRGEPGTALLAPLVLSLGLALACLGLLLVVVSLGSWATLSAQEPSQEELTAEDRREPPELNPQTEESQDVVPFLEQLVRPRRSAPKGRKARPRRAIAAHYEVHPRPGQDGAQAGVDGTVSGWEETKINSSSPLRYDRQIGEFTVIRAGLYYLYCQVHFDEGKAVYLKLDLLVNGVLALRCLEEFSATAASSPGPQLRLCQVSGLLPLRPGSSLRIRTLPWAHLKAAPFLTYFGLFQVH.

Topologically, residues 1–21 (MAARRSQRRRGRRGEPGTALL) are cytoplasmic. Residues 22 to 45 (APLVLSLGLALACLGLLLVVVSLG) form a helical; Signal-anchor for type II membrane protein membrane-spanning segment. Residues 46 to 249 (SWATLSAQEP…LTYFGLFQVH (204 aa)) are Extracellular-facing. The segment at 52–78 (AQEPSQEELTAEDRREPPELNPQTEES) is disordered. Residues 107-248 (IAAHYEVHPR…FLTYFGLFQV (142 aa)) form the THD domain. Residue asparagine 139 is glycosylated (N-linked (GlcNAc...) asparagine). A disulfide bridge links cysteine 191 with cysteine 210.

Belongs to the tumor necrosis factor family. Homotrimer. Interacts with the angiogenic factor AGGF1/VG5Q. In terms of processing, the soluble form is produced from the membrane form by proteolytic processing. In terms of tissue distribution, widely expressed.

The protein resides in the cell membrane. It localises to the secreted. In terms of biological role, binds to FN14 and possibly also to TNRFSF12/APO3. Weak inducer of apoptosis in some cell types. Mediates NF-kappa-B activation. Promotes angiogenesis and the proliferation of endothelial cells. Also involved in induction of inflammatory cytokines. Promotes IL8 secretion. In Mus musculus (Mouse), this protein is Tumor necrosis factor ligand superfamily member 12 (Tnfsf12).